We begin with the raw amino-acid sequence, 110 residues long: uncharacterized protein (110 aa).

A disordered region spans residues 86 to 110; it reads SEEIDEPVMKKRHRRKGSPHRAPFF. Over residues 95-104 the composition is skewed to basic residues; sequence KKRHRRKGSP.

This is an uncharacterized protein from Arabidopsis thaliana (Mouse-ear cress).